A 156-amino-acid chain; its full sequence is ATP synthase subunit b (156 aa).

The helical transmembrane segment at 11–31 (LIAFALFVWFCMKFVWPPIIN) threads the bilayer.

It belongs to the ATPase B chain family. F-type ATPases have 2 components, F(1) - the catalytic core - and F(0) - the membrane proton channel. F(1) has five subunits: alpha(3), beta(3), gamma(1), delta(1), epsilon(1). F(0) has three main subunits: a(1), b(2) and c(10-14). The alpha and beta chains form an alternating ring which encloses part of the gamma chain. F(1) is attached to F(0) by a central stalk formed by the gamma and epsilon chains, while a peripheral stalk is formed by the delta and b chains.

It localises to the cell inner membrane. Its function is as follows. F(1)F(0) ATP synthase produces ATP from ADP in the presence of a proton or sodium gradient. F-type ATPases consist of two structural domains, F(1) containing the extramembraneous catalytic core and F(0) containing the membrane proton channel, linked together by a central stalk and a peripheral stalk. During catalysis, ATP synthesis in the catalytic domain of F(1) is coupled via a rotary mechanism of the central stalk subunits to proton translocation. In terms of biological role, component of the F(0) channel, it forms part of the peripheral stalk, linking F(1) to F(0). The polypeptide is ATP synthase subunit b (Haemophilus influenzae (strain PittGG)).